An 805-amino-acid chain; its full sequence is MSDIDRGLFERVLPARIRGSYAAKFNVLLLVVVIIVAAAGGYIHLQTQSTVGENTERRVSGIAEQQAATLHDWLTQKESTTTFLASNIGGDAVRTSDVKPQLERQLATLQQDVRAIHVVSTSQDTVVASTDDARSGTTLQAGDAPWLSTIEDGTTDVSVSDPYEVDDSPVVAMTAPTDKPGWVLVMTMSLAQHSQSFNSPIATGDVKVVNGDGVITLDNRNRALLEQYTDTAGNVPAAVATARSGQTVYNTEPERTGMDDGRYATAYTPVAGTDWVLTYHVPRGQAYALQSEVTQNLAGLVVVALVGLLLVGLTVGRRTSSALDELAGVAAAIADGDLDTTIPDTDRTDELGQLVGAFGEMQTYLTTAASQADALADQNFDADVLDEDLPGAFGASLSQMHTRLEALITDLDEAREDAEQTRKDAEEARAASERLNERLERRAAEYSDEMAAAAAGDLTRRLDEDVDSEPMQDIAEAFNDMMGDVEATLAQVRSIADAVDAASTDVSTSAAEIRSASDQVSESVQDISADADQQRDRLGTVGDEVTSLSATVEEIAASADDVAETVNQAATESERGQELGEDAVAELERIEATADSAVERVTALEEAVDAIGDVTGVITDIAEQTNMLALNANIEAARADKSGDGFAVVADEVKDLADEVKESATEIETLVDDVQADVADTVADMSELGDRVDAGSETIEAALAALDDIGDQVEAANGSVQSISDATDEQAASTEEVVTMIDEVTDLSDRTATESQQVSAAAEEQAASVSEVAGRADDLDDQVSTLNDLLDQFDARAASADTDEN.

The next 2 helical transmembrane spans lie at 25–45 and 296–316; these read FNVLLLVVVIIVAAAGGYIHL and NLAGLVVVALVGLLLVGLTVG. 2 HAMP domains span residues 317–370 and 437–490; these read RRTS…TAAS and ERLE…ATLA. Residues 509 to 745 form the Methyl-accepting transducer domain; sequence SAAEIRSASD…EVVTMIDEVT (237 aa). Residues 513 to 532 form a disordered region; it reads IRSASDQVSESVQDISADAD. A compositionally biased stretch (polar residues) spans 516-526; the sequence is ASDQVSESVQD. Glutamate methyl ester (Glu) occurs at positions 554, 736, and 763. Positions 752 to 779 are disordered; sequence ATESQQVSAAAEEQAASVSEVAGRADDL. Residues 754 to 773 are compositionally biased toward low complexity; the sequence is ESQQVSAAAEEQAASVSEVA.

Belongs to the methyl-accepting chemotaxis (MCP) protein family. In terms of assembly, interacts with CheA, CheY, CheW1 and CheW2. Methylated by CheR.

It is found in the cell membrane. Mediates chemotaxis towards five attractant amino acids (leucine, isoleucine, valine, methionine and cysteine). Probably transduces the signal from the substrate-binding protein BasB to the histidine kinase CheA. The sequence is that of Transducer protein BasT (basT) from Halobacterium salinarum (strain ATCC 29341 / DSM 671 / R1).